The chain runs to 486 residues: Cardiolipin synthase A (486 aa).

The next 2 membrane-spanning stretches (helical) occupy residues 3-23 and 38-58; these read TVYT…IAGV and MAWL…YLAV. PLD phosphodiesterase domains are found at residues 219–246 and 399–426; these read MDLR…VDPR and EGGL…DMRS. Catalysis depends on residues H224, K226, D231, H404, K406, and D411.

Belongs to the phospholipase D family. Cardiolipin synthase subfamily. ClsA sub-subfamily.

It localises to the cell inner membrane. It catalyses the reaction 2 a 1,2-diacyl-sn-glycero-3-phospho-(1'-sn-glycerol) = a cardiolipin + glycerol. In terms of biological role, catalyzes the reversible phosphatidyl group transfer from one phosphatidylglycerol molecule to another to form cardiolipin (CL) (diphosphatidylglycerol) and glycerol. The protein is Cardiolipin synthase A of Shigella dysenteriae serotype 1 (strain Sd197).